A 232-amino-acid polypeptide reads, in one-letter code: MHLLIPAAGSGRRFGADRNKLLLPLLGQPVLAWALQAADQAQSITWIGIIGQPGDRADMEALVDQLQLATPVSWIQGGRERQESVFNGLRSLPSGAQQVLIHDGARCLATPTLFDRCSAALQTCPAFVAAVPVKDTIKQVAADGTIAATPDRSTLWAAQTPQGFTVESLLRCHRQGLKQQLAVTDDAALLEAFGLPVQIVEGEETNLKVTTPADLAIAELILKQRQFTAAIA.

Belongs to the IspD/TarI cytidylyltransferase family. IspD subfamily.

It catalyses the reaction 2-C-methyl-D-erythritol 4-phosphate + CTP + H(+) = 4-CDP-2-C-methyl-D-erythritol + diphosphate. Its pathway is isoprenoid biosynthesis; isopentenyl diphosphate biosynthesis via DXP pathway; isopentenyl diphosphate from 1-deoxy-D-xylulose 5-phosphate: step 2/6. Functionally, catalyzes the formation of 4-diphosphocytidyl-2-C-methyl-D-erythritol from CTP and 2-C-methyl-D-erythritol 4-phosphate (MEP). The chain is 2-C-methyl-D-erythritol 4-phosphate cytidylyltransferase from Synechococcus sp. (strain ATCC 27144 / PCC 6301 / SAUG 1402/1) (Anacystis nidulans).